Here is an 835-residue protein sequence, read N- to C-terminus: Leucine--tRNA ligase (835 aa).

Positions 41–52 (PYPSGQGLHVGH) match the 'HIGH' region motif. A 'KMSKS' region motif is present at residues 611–615 (KMSKS). Lys614 contacts ATP.

It belongs to the class-I aminoacyl-tRNA synthetase family.

The protein localises to the cytoplasm. The enzyme catalyses tRNA(Leu) + L-leucine + ATP = L-leucyl-tRNA(Leu) + AMP + diphosphate. In Elusimicrobium minutum (strain Pei191), this protein is Leucine--tRNA ligase.